The following is a 327-amino-acid chain: GTPase Obg (327 aa).

An Obg domain is found at 1-159 (MQFIDQANII…WEVQLELKLL (159 aa)). In terms of domain architecture, OBG-type G spans 160-327 (AEVGIIGLPN…SLLSEVWNRI (168 aa)). Residues 166–173 (GLPNAGKS), 191–195 (FTTLI), 213–216 (DIPG), 280–283 (NKKE), and 309–311 (SSA) contribute to the ATP site. Mg(2+)-binding residues include S173 and T193.

The protein belongs to the TRAFAC class OBG-HflX-like GTPase superfamily. OBG GTPase family. As to quaternary structure, monomer. Requires Mg(2+) as cofactor.

The protein localises to the cytoplasm. An essential GTPase which binds GTP, GDP and possibly (p)ppGpp with moderate affinity, with high nucleotide exchange rates and a fairly low GTP hydrolysis rate. Plays a role in control of the cell cycle, stress response, ribosome biogenesis and in those bacteria that undergo differentiation, in morphogenesis control. This Prochlorococcus marinus (strain MIT 9515) protein is GTPase Obg.